A 332-amino-acid polypeptide reads, in one-letter code: Glyceraldehyde-3-phosphate dehydrogenase 1 (332 aa).

Residues 11-12 (RI), D33, and R78 each bind NAD(+). Residues 149-151 (SCT), T180, 209-210 (TG), and R232 contribute to the D-glyceraldehyde 3-phosphate site. Catalysis depends on C150, which acts as the Nucleophile. N314 is an NAD(+) binding site.

The protein belongs to the glyceraldehyde-3-phosphate dehydrogenase family. As to quaternary structure, homotetramer.

It is found in the cytoplasm. It carries out the reaction D-glyceraldehyde 3-phosphate + phosphate + NAD(+) = (2R)-3-phospho-glyceroyl phosphate + NADH + H(+). Its pathway is carbohydrate degradation; glycolysis; pyruvate from D-glyceraldehyde 3-phosphate: step 1/5. In Candida glabrata (strain ATCC 2001 / BCRC 20586 / JCM 3761 / NBRC 0622 / NRRL Y-65 / CBS 138) (Yeast), this protein is Glyceraldehyde-3-phosphate dehydrogenase 1 (GPD1).